The sequence spans 466 residues: Adenosylhomocysteinase (466 aa).

The substrate site is built by T57, D132, and E192. 193–195 (TTT) lines the NAD(+) pocket. Residues K222 and D226 each contribute to the substrate site. NAD(+) is bound by residues N227, 256–261 (GYGDVG), E279, N314, 335–337 (IGH), and N380.

It belongs to the adenosylhomocysteinase family. NAD(+) is required as a cofactor.

It is found in the cytoplasm. The enzyme catalyses S-adenosyl-L-homocysteine + H2O = L-homocysteine + adenosine. It participates in amino-acid biosynthesis; L-homocysteine biosynthesis; L-homocysteine from S-adenosyl-L-homocysteine: step 1/1. May play a key role in the regulation of the intracellular concentration of adenosylhomocysteine. This Rhizobium etli (strain CIAT 652) protein is Adenosylhomocysteinase.